We begin with the raw amino-acid sequence, 92 residues long: Small ribosomal subunit protein uS19 (92 aa).

It belongs to the universal ribosomal protein uS19 family.

Its function is as follows. Protein S19 forms a complex with S13 that binds strongly to the 16S ribosomal RNA. This Cereibacter sphaeroides (strain ATCC 17029 / ATH 2.4.9) (Rhodobacter sphaeroides) protein is Small ribosomal subunit protein uS19.